Reading from the N-terminus, the 176-residue chain is NAD(P)H-quinone oxidoreductase subunit 6, chloroplastic (176 aa).

5 consecutive transmembrane segments (helical) span residues 10–30, 32–52, 61–81, 92–112, and 152–172; these read FLLV…VLLT, PIYS…LYIL, AQLL…VMFM, LWTV…GLLI, and FFLP…GAIT.

The protein belongs to the complex I subunit 6 family. In terms of assembly, NDH is composed of at least 16 different subunits, 5 of which are encoded in the nucleus.

Its subcellular location is the plastid. The protein localises to the chloroplast thylakoid membrane. The enzyme catalyses a plastoquinone + NADH + (n+1) H(+)(in) = a plastoquinol + NAD(+) + n H(+)(out). It carries out the reaction a plastoquinone + NADPH + (n+1) H(+)(in) = a plastoquinol + NADP(+) + n H(+)(out). NDH shuttles electrons from NAD(P)H:plastoquinone, via FMN and iron-sulfur (Fe-S) centers, to quinones in the photosynthetic chain and possibly in a chloroplast respiratory chain. The immediate electron acceptor for the enzyme in this species is believed to be plastoquinone. Couples the redox reaction to proton translocation, and thus conserves the redox energy in a proton gradient. This Morus indica (Mulberry) protein is NAD(P)H-quinone oxidoreductase subunit 6, chloroplastic (ndhG).